A 272-amino-acid polypeptide reads, in one-letter code: Putative phosphoenolpyruvate synthase regulatory protein (272 aa).

Residue 151 to 158 participates in ADP binding; sequence GVSRSGKT.

It belongs to the pyruvate, phosphate/water dikinase regulatory protein family. PSRP subfamily.

The catalysed reaction is [pyruvate, water dikinase] + ADP = [pyruvate, water dikinase]-phosphate + AMP + H(+). The enzyme catalyses [pyruvate, water dikinase]-phosphate + phosphate + H(+) = [pyruvate, water dikinase] + diphosphate. In terms of biological role, bifunctional serine/threonine kinase and phosphorylase involved in the regulation of the phosphoenolpyruvate synthase (PEPS) by catalyzing its phosphorylation/dephosphorylation. The chain is Putative phosphoenolpyruvate synthase regulatory protein from Desulfotalea psychrophila (strain LSv54 / DSM 12343).